We begin with the raw amino-acid sequence, 451 residues long: Plasmepsin III (451 aa).

Residues Met-1–Leu-37 are Cytoplasmic-facing. Positions Met-1–Gly-123 are excised as a propeptide. A helical; Signal-anchor for type II membrane protein membrane pass occupies residues Phe-38–Phe-58. At Glu-59–Leu-451 the chain is on the lumenal side. The region spanning Ser-139 to Ala-446 is the Peptidase A1 domain. 2 cysteine pairs are disulfide-bonded: Cys-170–Cys-175 and Cys-372–Cys-408.

It belongs to the peptidase A1 family. As to quaternary structure, probable homodimer; in the zymogen form. Monomer; in the active form. Acidification disrupts homodimerization. Component of the hemozoin formation complex (HFC) composed of falcipains FP2A and/or FP2B, plasmepsins PMII, PMIII/HAP and PMIV, heme detoxifying protein HDP and falcilysin FLN. The HFC complex is involved in hemoglobin degradation and detoxification of heme in the food vacuole during the asexual blood stage. Proteolytically cleaved into the soluble active mature form by cysteine proteases in the digestive vacuole of trophozoites. Proteolysis requires an acidic environment. Transprocessing may serve as an alternate activation system.

The protein localises to the membrane. It is found in the vacuole lumen. The enzyme catalyses Hydrolysis of the bonds linking certain hydrophobic residues in hemoglobin or globin. Also cleaves small molecules substrates such as Ala-Leu-Glu-Arg-Thr-Phe-|-Phe(NO2)-Ser-Phe-Pro-Thr.. Its activity is regulated as follows. Dimerization causes loss of catalytic activity. Inhibited by pepstatin A. Inhibited by Zn(2+). During the asexual blood stage, catalyzes the cleavage of denatured host hemoglobin (Hb) or globins. Digestion of host Hb is an essential step which provides the parasite with amino acids for protein synthesis, and regulates osmolarity. In Plasmodium falciparum (isolate 3D7), this protein is Plasmepsin III.